Here is a 104-residue protein sequence, read N- to C-terminus: Large ribosomal subunit protein bL21 (104 aa).

Belongs to the bacterial ribosomal protein bL21 family. Part of the 50S ribosomal subunit. Contacts protein L20.

Its function is as follows. This protein binds to 23S rRNA in the presence of protein L20. This chain is Large ribosomal subunit protein bL21, found in Desulfosudis oleivorans (strain DSM 6200 / JCM 39069 / Hxd3) (Desulfococcus oleovorans).